An 87-amino-acid polypeptide reads, in one-letter code: Small ribosomal subunit protein bS20 (87 aa).

The segment at 1-24 is disordered; that stretch reads MANTAQARKRARQSVERNKHNSSL.

This sequence belongs to the bacterial ribosomal protein bS20 family.

Binds directly to 16S ribosomal RNA. The protein is Small ribosomal subunit protein bS20 of Bordetella petrii (strain ATCC BAA-461 / DSM 12804 / CCUG 43448).